The following is a 355-amino-acid chain: tRNA-specific 2-thiouridylase MnmA (355 aa).

ATP-binding positions include 6 to 13 and Met32; that span reads AMSGGVDS. Cys93 (nucleophile) is an active-site residue. A disulfide bridge links Cys93 with Cys191. Gly117 serves as a coordination point for ATP. Positions 140–142 are interaction with tRNA; it reads KDQ. Cys191 functions as the Cysteine persulfide intermediate in the catalytic mechanism. The segment at 296–297 is interaction with tRNA; sequence RY.

The protein belongs to the MnmA/TRMU family.

The protein resides in the cytoplasm. The catalysed reaction is S-sulfanyl-L-cysteinyl-[protein] + uridine(34) in tRNA + AH2 + ATP = 2-thiouridine(34) in tRNA + L-cysteinyl-[protein] + A + AMP + diphosphate + H(+). Catalyzes the 2-thiolation of uridine at the wobble position (U34) of tRNA, leading to the formation of s(2)U34. The protein is tRNA-specific 2-thiouridylase MnmA of Pelobacter propionicus (strain DSM 2379 / NBRC 103807 / OttBd1).